Here is a 123-residue protein sequence, read N- to C-terminus: Large ribosomal subunit protein uL14 (123 aa).

This sequence belongs to the universal ribosomal protein uL14 family. Part of the 50S ribosomal subunit. Forms a cluster with proteins L3 and L19. In the 70S ribosome, L14 and L19 interact and together make contacts with the 16S rRNA in bridges B5 and B8.

Its function is as follows. Binds to 23S rRNA. Forms part of two intersubunit bridges in the 70S ribosome. The polypeptide is Large ribosomal subunit protein uL14 (Corynebacterium urealyticum (strain ATCC 43042 / DSM 7109)).